We begin with the raw amino-acid sequence, 159 residues long: U1 small nuclear ribonucleoprotein C (159 aa).

A Matrin-type zinc finger spans residues 4–36 (FYCDYCDTYLTHDSPSVRKTHCSGRKHKENVKD). Disordered regions lie at residues 63–95 (PPTPFAAPPAGSAMIPPPPSLGGPPRPGMMPAP) and 139–159 (MRPPTRPMMLQSRPGMARPDR). The span at 77–95 (IPPPPSLGGPPRPGMMPAP) shows a compositional bias: pro residues.

This sequence belongs to the U1 small nuclear ribonucleoprotein C family. As to quaternary structure, component of the U1 snRNP. The U1 snRNP is composed of the U1 snRNA and the 7 core Sm proteins snrpb, snrpd1, snrpd2, snrpd3, snrpe, snrpf and snrpg that assemble in a heptameric protein ring on the Sm site of the small nuclear RNA to form the core snRNP, and at least 3 U1 snRNP-specific proteins snrnp70/U1-70K, snrpa/U1-A and snrpc/U1-C. snrpc/U1-C interacts with U1 snRNA and the 5' splice-site region of the pre-mRNA.

The protein resides in the nucleus. Its function is as follows. Component of the spliceosomal U1 snRNP, which is essential for recognition of the pre-mRNA 5' splice-site and the subsequent assembly of the spliceosome. SNRPC/U1-C is directly involved in initial 5' splice-site recognition for both constitutive and regulated alternative splicing. The interaction with the 5' splice-site seems to precede base-pairing between the pre-mRNA and the U1 snRNA. Stimulates commitment or early (E) complex formation by stabilizing the base pairing of the 5' end of the U1 snRNA and the 5' splice-site region. The sequence is that of U1 small nuclear ribonucleoprotein C from Xenopus laevis (African clawed frog).